A 125-amino-acid chain; its full sequence is Small ribosomal subunit protein uS13 (125 aa).

A disordered region spans residues 92–125 (RRHLPVHGQRTKTNARTRKGPKKTVAGKKKAGKK).

The protein belongs to the universal ribosomal protein uS13 family. In terms of assembly, part of the 30S ribosomal subunit. Forms a loose heterodimer with protein S19. Forms two bridges to the 50S subunit in the 70S ribosome.

Functionally, located at the top of the head of the 30S subunit, it contacts several helices of the 16S rRNA. In the 70S ribosome it contacts the 23S rRNA (bridge B1a) and protein L5 of the 50S subunit (bridge B1b), connecting the 2 subunits; these bridges are implicated in subunit movement. Contacts the tRNAs in the A and P-sites. This chain is Small ribosomal subunit protein uS13, found in Saccharopolyspora erythraea (strain ATCC 11635 / DSM 40517 / JCM 4748 / NBRC 13426 / NCIMB 8594 / NRRL 2338).